The sequence spans 296 residues: Hca operon transcriptional activator HcaR (296 aa).

The HTH lysR-type domain maps to 1-58 (MELRHLRYFVAVAQALNFTRAAEKLHTSQPSLSSQIRDLENCVGVPLLVRDKRKVALT). The H-T-H motif DNA-binding region spans 18–38 (FTRAAEKLHTSQPSLSSQIRD).

The protein belongs to the LysR transcriptional regulatory family.

In terms of biological role, transcriptional activator of the hca operon for 3-phenylpropionic acid catabolism. This Escherichia coli (strain K12) protein is Hca operon transcriptional activator HcaR (hcaR).